The sequence spans 581 residues: Caprolactamase subunit beta (581 aa).

Zn(2+) contacts are provided by Asp-41, His-99, Asp-102, and His-124.

It belongs to the HyuB family. As to quaternary structure, the caprolactamase is a heterotetramer composed of two alpha subunits (CapA) and two beta subunits (CapB). The cofactor is Zn(2+).

Activity is dependent on the presence of ATP and bicarbonate. The requirement for bicarbonate may be related to allosteric activation through conformational effects, but it is also conceivable that carboxyphosphate is formed and acts as a mediator in caprolactam activation, forming carboxy- or phospholactim. In terms of biological role, component of a caprolactamase involved in the degradation of caprolactam, an industrial compound mainly used in the production of Nylon 6. Catalyzes the ATP-dependent hydrolysis of the caprolactam ring to form 6-aminocaproic acid (6-ACA). The beta subunit is responsible for hydrolytic lactam ring opening. The enzyme cannot use 5-oxoproline. The polypeptide is Caprolactamase subunit beta (Pseudomonas jessenii).